The following is a 352-amino-acid chain: Dysbindin (352 aa).

At serine 11 the chain carries Phosphoserine. Residues 92 to 180 are a coiled coil; sequence TSLAELQEQL…AELDTEHAQK (89 aa). The short motif at 243–256 is the Nuclear export signal element; the sequence is LMDLSDQEALDVFL. Residues 267 to 352 form a disordered region; it reads SPGLEMESNP…SDQCDSTQDI (86 aa). Residues 274 to 285 are compositionally biased toward polar residues; the sequence is SNPSQNEMNLQI. Residues 286–301 are compositionally biased toward low complexity; the sequence is PNPSESASQPPASPSA. Residues serine 340 and serine 343 each carry the phosphoserine modification.

Belongs to the dysbindin family. In terms of assembly, interacts (via its coiled coil domain) with KXD1. Interacts with AP3B2, TRIM32, CMYA5, PI4K2 and RNF151. Interacts with the DNA-dependent protein kinase complex DNA-PK; the interaction phosphorylates DTNBP1 in vitro. Interacts directly in this complex with XRCC5 and XRCC6. Interacts with XPO1; the interaction exports DTNBP1 out of the nucleus. Component of the biogenesis of lysosome-related organelles complex 1 (BLOC-1) composed of at least BLOC1S1, BLOC1S2, BLOC1S3, BLOC1S4, BLOC1S5, BLOC1S6, DTNBP1/BLOC1S7 and SNAPIN/BLOC1S8. Interacts directly in the complex with BLOC1S5, BLOC1S6 and SNAPIN/BLOC1S8. The BLOC-1 complex associates with the AP-3 protein complex and membrane protein cargos. This BLOC-1 complex also associates with the BLOC-2 complex in endosomes. Binds to DTNA and DTNB but may not be a physiological binding partner. Interacts with AP3M1. Post-translationally, ubiquitinated by TRIM32. Ubiquitination leads to DTNBP1 degradation. In terms of tissue distribution, detected in hippocampus neurons (at protein level). Ubiquitously expressed. The highest expression is observed in testis, liver, kidney, brain, heart and lung. In the brain, found primarily in axon bundles and axon terminals, notably in the cerebellum and hippocampus. Expressed at lower levels in stomach, small intestine and skeletal muscle, where it is detected at the sarcolemma.

Its subcellular location is the cytoplasm. It is found in the cytoplasmic vesicle membrane. The protein resides in the cytoplasmic vesicle. The protein localises to the secretory vesicle. It localises to the synaptic vesicle membrane. Its subcellular location is the endosome membrane. It is found in the melanosome membrane. The protein resides in the nucleus. The protein localises to the postsynaptic density. It localises to the presynaptic cell membrane. Its subcellular location is the endoplasmic reticulum. In terms of biological role, component of the BLOC-1 complex, a complex that is required for normal biogenesis of lysosome-related organelles (LRO), such as platelet dense granules and melanosomes. In concert with the AP-3 complex, the BLOC-1 complex is required to target membrane protein cargos into vesicles assembled at cell bodies for delivery into neurites and nerve terminals. The BLOC-1 complex, in association with SNARE proteins, is also proposed to be involved in neurite extension. Associates with the BLOC-2 complex to facilitate the transport of TYRP1 independent of AP-3 function. Plays a role in synaptic vesicle trafficking and in neurotransmitter release. Plays a role in the regulation of cell surface exposure of DRD2. May play a role in actin cytoskeleton reorganization and neurite outgrowth. May modulate MAPK8 phosphorylation. Appears to promote neuronal transmission and viability through regulating the expression of SNAP25 and SYN1, modulating PI3-kinase-Akt signaling and influencing glutamatergic release. Regulates the expression of SYN1 through binding to its promoter. Modulates prefrontal cortical activity via the dopamine/D2 pathway. This chain is Dysbindin (Dtnbp1), found in Rattus norvegicus (Rat).